Reading from the N-terminus, the 252-residue chain is Adenylate kinase (252 aa).

Residue Gly47–Thr52 coordinates ATP. Residues Ala67–Val96 are NMP. Residues Thr68, Arg73, Gly94–Val96, Gly123–Arg126, and Gln130 contribute to the AMP site. The segment at Gly164–Asp201 is LID. ATP contacts are provided by residues Arg165 and Ser174–Tyr175. The AMP site is built by Arg198 and Arg209. Gln237 contributes to the ATP binding site.

This sequence belongs to the adenylate kinase family. AK2 subfamily. Monomer.

It localises to the cytoplasm. The protein localises to the cytosol. Its subcellular location is the mitochondrion intermembrane space. The catalysed reaction is AMP + ATP = 2 ADP. Functionally, catalyzes the reversible transfer of the terminal phosphate group between ATP and AMP. Plays an important role in cellular energy homeostasis and in adenine nucleotide metabolism. Adenylate kinase activity is critical for regulation of the phosphate utilization and the AMP de novo biosynthesis pathways. The polypeptide is Adenylate kinase (Lodderomyces elongisporus (strain ATCC 11503 / CBS 2605 / JCM 1781 / NBRC 1676 / NRRL YB-4239) (Yeast)).